The primary structure comprises 136 residues: uncharacterized protein (136 aa).

The chain crosses the membrane as a helical span at residues 7–27 (ANVLAILLVSLFLINGLVFLS).

The protein localises to the membrane. This is an uncharacterized protein from Mycoplasma pneumoniae (strain ATCC 29342 / M129 / Subtype 1) (Mycoplasmoides pneumoniae).